The chain runs to 495 residues: Loline biosynthesis cluster 1 transcription factor lolU1 (495 aa).

Its subcellular location is the nucleus. Functionally, transcriptional regulator that may regulate the expression of the loline biosynthesis cluster 1, one of the 2 clusters involved in the biosynthesis of loline alkaloids, potent insecticidal agents composed of a pyrrolizidine ring system and an uncommon ether bridge linking carbons 2 and 7. This chain is Loline biosynthesis cluster 1 transcription factor lolU1, found in Epichloe uncinata (Endophyte fungus).